The chain runs to 251 residues: Ubiquinone/menaquinone biosynthesis C-methyltransferase UbiE (251 aa).

S-adenosyl-L-methionine contacts are provided by residues Thr-74, Asp-95, and 123 to 124; that span reads NA.

This sequence belongs to the class I-like SAM-binding methyltransferase superfamily. MenG/UbiE family.

It catalyses the reaction a 2-demethylmenaquinol + S-adenosyl-L-methionine = a menaquinol + S-adenosyl-L-homocysteine + H(+). The enzyme catalyses a 2-methoxy-6-(all-trans-polyprenyl)benzene-1,4-diol + S-adenosyl-L-methionine = a 5-methoxy-2-methyl-3-(all-trans-polyprenyl)benzene-1,4-diol + S-adenosyl-L-homocysteine + H(+). Its pathway is quinol/quinone metabolism; menaquinone biosynthesis; menaquinol from 1,4-dihydroxy-2-naphthoate: step 2/2. It participates in cofactor biosynthesis; ubiquinone biosynthesis. Methyltransferase required for the conversion of demethylmenaquinol (DMKH2) to menaquinol (MKH2) and the conversion of 2-polyprenyl-6-methoxy-1,4-benzoquinol (DDMQH2) to 2-polyprenyl-3-methyl-6-methoxy-1,4-benzoquinol (DMQH2). In Shewanella sediminis (strain HAW-EB3), this protein is Ubiquinone/menaquinone biosynthesis C-methyltransferase UbiE.